We begin with the raw amino-acid sequence, 260 residues long: G patch domain-containing protein 11 (260 aa).

A coiled-coil region spans residues 25 to 61 (MLRQIREARRKEEKRQEANLKNRQKSIKEEEQERRDM). Residues 33 to 60 (RRKEEKRQEANLKNRQKSIKEEEQERRD) are disordered. The G-patch domain maps to 69-115 (CENKGFALLQKMGYKSGQALGKSGDGIVEPIPLNVKTGKSGIGHETL). Lys123 is subject to N6-acetyllysine. The interval 187 to 212 (WLRPEEETEEETEEEKEQDEDEYKSE) is disordered. Over residues 192–210 (EETEEETEEEKEQDEDEYK) the composition is skewed to acidic residues.

The protein belongs to the GPATCH11 family.

Its subcellular location is the chromosome. The protein resides in the centromere. It localises to the kinetochore. In Bos taurus (Bovine), this protein is G patch domain-containing protein 11 (GPATCH11).